Reading from the N-terminus, the 1460-residue chain is ABC transporter C family member 5 (1460 aa).

Disordered regions lie at residues 1–23 (MKYNNLENDDSDIHNNNNNNESE) and 37–68 (GNNNNDINNNNNINNNNDSLDYENNKGSKKKN). Over residues 37–55 (GNNNNDINNNNNINNNNDS) the composition is skewed to low complexity. A run of 5 helical transmembrane segments spans residues 196–216 (FALSWVHFGLNVISQFIGPIF), 238–258 (LGYYYALILFVNSMLGSIFLY), 320–340 (LIFAVPMIIVSMILLYDCVGW), 425–445 (LIVVVQSIPTIISIFMFTVYY), and 456–476 (IFAAVAYLNIIRVPFTFLPYG). The region spanning 196–482 (FALSWVHFGL…LPYGYNIYIQ (287 aa)) is the ABC transmembrane type-1 1 domain. Positions 537–567 (IKPQTNPPPPRTTPSNDKSSPSGNNSNNEKK) are disordered. The span at 551-563 (SNDKSSPSGNNSN) shows a compositional bias: polar residues. An ABC transporter 1 domain is found at 560–783 (NNSNNEKKEV…INSAYGNSSL (224 aa)). Residue 593–600 (GPVGSGKS) coordinates ATP. A run of 4 helical transmembrane segments spans residues 842–862 (MYYVTAGGGFLFLIALLGYCI), 922–942 (AGEFLGVFIAIGVLTVLLIIV), 1014–1034 (ILVIISIATPWLLLPMTPIII), and 1108–1128 (WLGLRLSVLGNLITLLSCIFI). The ABC transmembrane type-1 2 domain occupies 853 to 1166 (FLIALLGYCI…ATQQLAELET (314 aa)). In terms of domain architecture, ABC transporter 2 spans 1210-1444 (IIFENVVMSY…ENSLFNWLID (235 aa)). 1244–1251 (GRTGSGKS) contacts ATP.

The protein belongs to the ABC transporter superfamily. ABCC family. Conjugate transporter (TC 3.A.1.208) subfamily.

The protein resides in the membrane. The chain is ABC transporter C family member 5 (abcC5) from Dictyostelium discoideum (Social amoeba).